The primary structure comprises 624 residues: METVNTTARLTTLRSLMKENGVDIYGIIVPSEDSHASEYIAPCDGRRAFISGFTGSAGTAVVTQDKAALATDGRYFNQAGKQLDGNWHLLKTGLQDVPTWQDWTAEASAGGKTVGVDPSLISSPIAEKLDESIKKSGGAGLKAVSENLVDPVWGSDRPARSSNPVKLLIGKYSGKDTAAKLTELRKELEKKKAAAFVLSMLDEVAWLFNLRGSDITYNPVFYSYAIVTQDSATLYVDVSKLDDESRSYLDQNKVTIKPYDTLFEDAKALASAAEAKGTSEAPRKYFVSNKGSWALKLALGGDKFVEEVRSPVGDAKAVKNDTELEGMRQCHIRDGVALIQFFAWLEDQLVNKKAVLDEVAAADQLEALRSKQTDFVGLSFDTISSTGPNAAVIHYKPEPGACSIIDPEAIYLCDSGAQFLDGTTDVTRTLHFGTPTAEQKKAYTLVLKGNIALDTAIFPKGTTGYAIDCLARQFLWASSPFSTKQGLDYRHGTGHGVGSYLNVHEGPIGIGTRKQYAEVALAAGNVLSIEPGFYEDGSYGIRIENLAMVREVKTEHSFGDKPFLGFEHVTMVPYCRKLIDEALLTAEEREWLNQSNKEIREKMAGRFDGDQLTQAWLERETQPF.

Residues Asp-414, Asp-425, Glu-530, and Glu-544 each contribute to the Mn(2+) site.

The protein belongs to the peptidase M24B family. It depends on Mn(2+) as a cofactor.

It carries out the reaction Release of any N-terminal amino acid, including proline, that is linked to proline, even from a dipeptide or tripeptide.. Functionally, catalyzes the removal of a penultimate prolyl residue from the N-termini of peptides. This Chaetomium globosum (strain ATCC 6205 / CBS 148.51 / DSM 1962 / NBRC 6347 / NRRL 1970) (Soil fungus) protein is Probable Xaa-Pro aminopeptidase P (AMPP).